We begin with the raw amino-acid sequence, 1066 residues long: DNA-directed RNA polymerase subunit beta (1066 aa).

This sequence belongs to the RNA polymerase beta chain family. In terms of assembly, in plastids the minimal PEP RNA polymerase catalytic core is composed of four subunits: alpha, beta, beta', and beta''. When a (nuclear-encoded) sigma factor is associated with the core the holoenzyme is formed, which can initiate transcription.

The protein localises to the plastid. Its subcellular location is the chloroplast. The catalysed reaction is RNA(n) + a ribonucleoside 5'-triphosphate = RNA(n+1) + diphosphate. Its function is as follows. DNA-dependent RNA polymerase catalyzes the transcription of DNA into RNA using the four ribonucleoside triphosphates as substrates. This is DNA-directed RNA polymerase subunit beta from Coffea arabica (Arabian coffee).